The following is a 233-amino-acid chain: Uridylate kinase (233 aa).

Position 9-10 (9-10) interacts with ATP; it reads GS. Gly-43 provides a ligand contact to UMP. ATP-binding residues include Gly-44 and Arg-48. UMP-binding positions include Asp-65 and 113–119; that span reads VTPGQTT. Thr-139, Tyr-145, and Asp-148 together coordinate ATP.

Belongs to the UMP kinase family. In terms of assembly, homohexamer.

Its subcellular location is the cytoplasm. It carries out the reaction UMP + ATP = UDP + ADP. It participates in pyrimidine metabolism; CTP biosynthesis via de novo pathway; UDP from UMP (UMPK route): step 1/1. Its activity is regulated as follows. Inhibited by UTP. In terms of biological role, catalyzes the reversible phosphorylation of UMP to UDP. The sequence is that of Uridylate kinase from Methanosarcina barkeri (strain Fusaro / DSM 804).